Consider the following 438-residue polypeptide: UDP-N-acetylmuramoylalanine--D-glutamate ligase (438 aa).

Residue 112-118 (GSNGKST) participates in ATP binding.

Belongs to the MurCDEF family.

The protein localises to the cytoplasm. The enzyme catalyses UDP-N-acetyl-alpha-D-muramoyl-L-alanine + D-glutamate + ATP = UDP-N-acetyl-alpha-D-muramoyl-L-alanyl-D-glutamate + ADP + phosphate + H(+). Its pathway is cell wall biogenesis; peptidoglycan biosynthesis. Functionally, cell wall formation. Catalyzes the addition of glutamate to the nucleotide precursor UDP-N-acetylmuramoyl-L-alanine (UMA). The polypeptide is UDP-N-acetylmuramoylalanine--D-glutamate ligase (Sodalis glossinidius (strain morsitans)).